The chain runs to 941 residues: Pre-mRNA-processing factor 6 (941 aa).

A disordered region spans residues 1 to 79 (MNKKKKPFLG…DEDLNDTNYD (79 aa)). Positions 39 to 65 (DANDPVDDRHAPPGKRTVGDQMKKNQA) are enriched in basic and acidic residues. Positions 66-78 (ADDDDEDLNDTNY) are enriched in acidic residues. S143 carries the post-translational modification Phosphoserine. Phosphothreonine occurs at positions 180, 266, and 275. Phosphoserine is present on S279. HAT repeat units follow at residues 384 to 416 (TDIR…LEEP), 418 to 444 (DARI…ARLE), 445 to 476 (TYEN…LEEA), 554 to 586 (NALE…FGKN), 588 to 620 (GTRE…SKWL), 622 to 654 (GDVP…LESE), 689 to 721 (DNIR…IEEQ), 723 to 755 (EMME…LEEK), and 855 to 887 (RKIT…FELQ).

Identified in the spliceosome B complex. Identified in the spliceosome C complex. Associates with the U5 snRNP particle. Component of the U4/U6-U5 tri-snRNP complex composed of the U4, U6 and U5 snRNAs and at least PRPF3, PRPF4, PRPF6, PRPF8, PRPF31, SNRNP200, TXNL4A, SNRNP40, DDX23, CD2BP2, PPIH, SNU13, EFTUD2, SART1 and USP39, LSm proteins LSm2-8 and Sm proteins. Interacts with ARAF1. Interacts with AR and NR3C1, but not ESR1, independently of the presence of hormones. Interacts with USH1G. In terms of processing, phosphorylated by PRP4K during spliceosome assembly.

The protein resides in the nucleus. It is found in the nucleoplasm. Its subcellular location is the nucleus speckle. Functionally, involved in pre-mRNA splicing as component of the U4/U6-U5 tri-snRNP complex, one of the building blocks of the spliceosome. Enhances dihydrotestosterone-induced transactivation activity of AR, as well as dexamethasone-induced transactivation activity of NR3C1, but does not affect estrogen-induced transactivation. This is Pre-mRNA-processing factor 6 (PRPF6) from Pongo abelii (Sumatran orangutan).